The primary structure comprises 238 residues: Ribonuclease PH (238 aa).

Residues R86 and G124–R126 contribute to the phosphate site.

It belongs to the RNase PH family. Homohexameric ring arranged as a trimer of dimers.

The catalysed reaction is tRNA(n+1) + phosphate = tRNA(n) + a ribonucleoside 5'-diphosphate. Its function is as follows. Phosphorolytic 3'-5' exoribonuclease that plays an important role in tRNA 3'-end maturation. Removes nucleotide residues following the 3'-CCA terminus of tRNAs; can also add nucleotides to the ends of RNA molecules by using nucleoside diphosphates as substrates, but this may not be physiologically important. Probably plays a role in initiation of 16S rRNA degradation (leading to ribosome degradation) during starvation. The chain is Ribonuclease PH from Brucella anthropi (strain ATCC 49188 / DSM 6882 / CCUG 24695 / JCM 21032 / LMG 3331 / NBRC 15819 / NCTC 12168 / Alc 37) (Ochrobactrum anthropi).